The primary structure comprises 868 residues: DNA mismatch repair protein MutS (868 aa).

Position 623–630 (623–630) interacts with ATP; it reads GPNMAGKS.

This sequence belongs to the DNA mismatch repair MutS family.

Its function is as follows. This protein is involved in the repair of mismatches in DNA. It is possible that it carries out the mismatch recognition step. This protein has a weak ATPase activity. The protein is DNA mismatch repair protein MutS of Magnetococcus marinus (strain ATCC BAA-1437 / JCM 17883 / MC-1).